The primary structure comprises 292 residues: Mitochondrial fission regulator 1-like (292 aa).

Position 30 is a phosphothreonine (T30). S41 is modified (phosphoserine). The residue at position 103 (S103) is a Phosphoserine; by AMPK. Residues S110, S224, and S225 each carry the phosphoserine modification. S238 bears the Phosphoserine; by AMPK mark. S261 and S273 each carry phosphoserine.

This sequence belongs to the MTFR1 family. Post-translationally, phosphorylated by AMPK. Upon stress, phosphorylation at Ser-103 and Ser-238 by AMPK is sufficient to induce mitochondrial fragmentation.

Its subcellular location is the mitochondrion outer membrane. Its function is as follows. Mitochondrial protein required for adaptation of miochondrial dynamics to metabolic changes. Regulates mitochondrial morphology at steady state and mediates AMPK-dependent stress-induced mitochondrial fragmentation via the control of OPA1 levels. The protein is Mitochondrial fission regulator 1-like of Homo sapiens (Human).